A 152-amino-acid polypeptide reads, in one-letter code: Bacchus (152 aa).

Residues 29-41 show a composition bias toward basic and acidic residues; it reads DLKAKAAAEDKAA. Residues 29 to 152 form a disordered region; that stretch reads DLKAKAAAED…DDGSGSDDQA (124 aa). Positions 42–51 are enriched in low complexity; sequence AADAAGDAAD. Positions 72–89 are enriched in basic and acidic residues; it reads ESVKGTKRPAEAKSAESK. Residues 99 to 152 show a composition bias toward acidic residues; sequence GDSDEEEALEEIIEGDSEIESDEYDIPYDGEEDDIECDDDDDDNDDGSGSDDQA.

In terms of tissue distribution, expressed in the brain.

The protein resides in the nucleus. Negatively regulates tyramine beta-hydroxylase tbh and thus the conversion of tyramine (TA) to octopamine (OA). In tyrosine decarboxylase 2 (Tdc2) neurons, acts in an amine-mediated signaling pathway to negatively regulate acute ethanol sensitivity probably via tbh-mediated depletion of TA. This Drosophila melanogaster (Fruit fly) protein is Bacchus.